The sequence spans 642 residues: Threonine--tRNA ligase (642 aa).

In terms of domain architecture, TGS spans 1–61 (MPVITLPDGS…DTDAQLAIIT (61 aa)). Residues 243–534 (DHRKIGKQLD…LTEEFAGFFP (292 aa)) form a catalytic region. Zn(2+) is bound by residues cysteine 334, histidine 385, and histidine 511.

It belongs to the class-II aminoacyl-tRNA synthetase family. In terms of assembly, homodimer. It depends on Zn(2+) as a cofactor.

The protein resides in the cytoplasm. The catalysed reaction is tRNA(Thr) + L-threonine + ATP = L-threonyl-tRNA(Thr) + AMP + diphosphate + H(+). Its function is as follows. Catalyzes the attachment of threonine to tRNA(Thr) in a two-step reaction: L-threonine is first activated by ATP to form Thr-AMP and then transferred to the acceptor end of tRNA(Thr). Also edits incorrectly charged L-seryl-tRNA(Thr). This Pectobacterium atrosepticum (strain SCRI 1043 / ATCC BAA-672) (Erwinia carotovora subsp. atroseptica) protein is Threonine--tRNA ligase.